The chain runs to 367 residues: tRNA uridine(34) hydroxylase (367 aa).

A Rhodanese domain is found at Glu159 to Ser249. Cys213 functions as the Cysteine persulfide intermediate in the catalytic mechanism.

It belongs to the TrhO family.

The enzyme catalyses uridine(34) in tRNA + AH2 + O2 = 5-hydroxyuridine(34) in tRNA + A + H2O. Catalyzes oxygen-dependent 5-hydroxyuridine (ho5U) modification at position 34 in tRNAs. This Leptospira borgpetersenii serovar Hardjo-bovis (strain L550) protein is tRNA uridine(34) hydroxylase.